A 342-amino-acid polypeptide reads, in one-letter code: Anthranilate phosphoribosyltransferase (342 aa).

Residues Gly-74, Gly-77–Asp-78, Thr-82, Asn-84–Thr-87, Lys-101–Gly-109, and Ser-113 each bind 5-phospho-alpha-D-ribose 1-diphosphate. Position 74 (Gly-74) interacts with anthranilate. Ser-86 is a Mg(2+) binding site. Asn-104 is a binding site for anthranilate. Arg-159 serves as a coordination point for anthranilate. Mg(2+)-binding residues include Asp-218 and Glu-219.

This sequence belongs to the anthranilate phosphoribosyltransferase family. In terms of assembly, homodimer. Mg(2+) serves as cofactor.

The catalysed reaction is N-(5-phospho-beta-D-ribosyl)anthranilate + diphosphate = 5-phospho-alpha-D-ribose 1-diphosphate + anthranilate. Its pathway is amino-acid biosynthesis; L-tryptophan biosynthesis; L-tryptophan from chorismate: step 2/5. Its function is as follows. Catalyzes the transfer of the phosphoribosyl group of 5-phosphorylribose-1-pyrophosphate (PRPP) to anthranilate to yield N-(5'-phosphoribosyl)-anthranilate (PRA). The chain is Anthranilate phosphoribosyltransferase from Sulfolobus acidocaldarius (strain ATCC 33909 / DSM 639 / JCM 8929 / NBRC 15157 / NCIMB 11770).